Here is a 423-residue protein sequence, read N- to C-terminus: Histidine--tRNA ligase (423 aa).

This sequence belongs to the class-II aminoacyl-tRNA synthetase family. In terms of assembly, homodimer.

It is found in the cytoplasm. The catalysed reaction is tRNA(His) + L-histidine + ATP = L-histidyl-tRNA(His) + AMP + diphosphate + H(+). This is Histidine--tRNA ligase from Staphylococcus haemolyticus (strain JCSC1435).